The chain runs to 122 residues: Flowering-promoting factor 1-like protein 3 (122 aa).

The tract at residues 16-36 is disordered; that stretch reads ENPGSEESSSAGDGGGGGRRK.

This sequence belongs to the FPF1 family.

This chain is Flowering-promoting factor 1-like protein 3, found in Oryza sativa subsp. japonica (Rice).